The primary structure comprises 312 residues: Ribosomal RNA small subunit methyltransferase H (312 aa).

S-adenosyl-L-methionine-binding positions include 38-40 (GGH), aspartate 58, phenylalanine 84, aspartate 104, and glutamine 111.

This sequence belongs to the methyltransferase superfamily. RsmH family.

It is found in the cytoplasm. It carries out the reaction cytidine(1402) in 16S rRNA + S-adenosyl-L-methionine = N(4)-methylcytidine(1402) in 16S rRNA + S-adenosyl-L-homocysteine + H(+). In terms of biological role, specifically methylates the N4 position of cytidine in position 1402 (C1402) of 16S rRNA. The protein is Ribosomal RNA small subunit methyltransferase H of Alcanivorax borkumensis (strain ATCC 700651 / DSM 11573 / NCIMB 13689 / SK2).